A 697-amino-acid polypeptide reads, in one-letter code: tRNA 5-methylaminomethyl-2-thiouridine biosynthesis bifunctional protein MnmC (697 aa).

A tRNA (mnm(5)s(2)U34)-methyltransferase region spans residues 1-272 (MPKPASMAMN…KREMLTAVMS (272 aa)). An FAD-dependent cmnm(5)s(2)U34 oxidoreductase region spans residues 300–697 (IGAGVAGLLT…HKHKTRQAVI (398 aa)).

It in the N-terminal section; belongs to the methyltransferase superfamily. tRNA (mnm(5)s(2)U34)-methyltransferase family. The protein in the C-terminal section; belongs to the DAO family. The cofactor is FAD.

The protein localises to the cytoplasm. The enzyme catalyses 5-aminomethyl-2-thiouridine(34) in tRNA + S-adenosyl-L-methionine = 5-methylaminomethyl-2-thiouridine(34) in tRNA + S-adenosyl-L-homocysteine + H(+). Its function is as follows. Catalyzes the last two steps in the biosynthesis of 5-methylaminomethyl-2-thiouridine (mnm(5)s(2)U) at the wobble position (U34) in tRNA. Catalyzes the FAD-dependent demodification of cmnm(5)s(2)U34 to nm(5)s(2)U34, followed by the transfer of a methyl group from S-adenosyl-L-methionine to nm(5)s(2)U34, to form mnm(5)s(2)U34. This chain is tRNA 5-methylaminomethyl-2-thiouridine biosynthesis bifunctional protein MnmC, found in Psychrobacter cryohalolentis (strain ATCC BAA-1226 / DSM 17306 / VKM B-2378 / K5).